The following is a 269-amino-acid chain: NAD kinase (269 aa).

Catalysis depends on aspartate 45, which acts as the Proton acceptor. Residues 45-46 (DG), 122-123 (NE), arginine 149, aspartate 151, and alanine 186 each bind NAD(+).

Belongs to the NAD kinase family. The cofactor is a divalent metal cation.

The protein localises to the cytoplasm. The enzyme catalyses NAD(+) + ATP = ADP + NADP(+) + H(+). Functionally, involved in the regulation of the intracellular balance of NAD and NADP, and is a key enzyme in the biosynthesis of NADP. Catalyzes specifically the phosphorylation on 2'-hydroxyl of the adenosine moiety of NAD to yield NADP. This chain is NAD kinase, found in Staphylococcus epidermidis (strain ATCC 35984 / DSM 28319 / BCRC 17069 / CCUG 31568 / BM 3577 / RP62A).